A 268-amino-acid polypeptide reads, in one-letter code: MEESAGATSAQSAATSVSESPAEETILVCASEPVTVDGGRLLVCRSPGPEGFYKVPLGLKVALPTGYAMLVAQRGGGRTTNGIVDAGFRGEVQAIVAPGRPRAQFYCTPLRLAPGIATDVPFFEVFAPKRDEDAGYDIPCPRELVLPPGGAETVTLPVHRTDGRHWAYVFGRSSLNLRGIVVFPTPWESGPCRFRIQNRGAHPVTLESGQRVAQLVLTREPLGWITGRSPFPATPRAPMQHRPAWLFARDFVAPSSARGARGFGSTGL.

Residues 172 to 174 and 263 to 264 each bind substrate; these read RSS and FG.

Belongs to the dUTPase family. Mg(2+) is required as a cofactor.

It catalyses the reaction dUTP + H2O = dUMP + diphosphate + H(+). In terms of biological role, involved in nucleotide metabolism: produces dUMP, the immediate precursor of thymidine nucleotides and decreases the intracellular concentration of dUTP to avoid uracil incorporation into viral DNA. The protein is Deoxyuridine 5'-triphosphate nucleotidohydrolase of Suid herpesvirus 1 (strain Kaplan) (SuHV-1).